The following is a 105-amino-acid chain: Small ribosomal subunit protein eS26 (105 aa).

It belongs to the eukaryotic ribosomal protein eS26 family. Component of the small ribosomal subunit.

The protein localises to the cytoplasm. The chain is Small ribosomal subunit protein eS26 (RPS26) from Encephalitozoon cuniculi (strain GB-M1) (Microsporidian parasite).